The chain runs to 140 residues: Protein YwqH (140 aa).

The stretch at 6–51 forms a coiled coil; the sequence is MLADIKSSLNGKISDVEDKIEKLKKAKKDIDTLQEEAITEIKEIVK.

The protein is Protein YwqH (ywqH) of Bacillus subtilis (strain 168).